We begin with the raw amino-acid sequence, 229 residues long: Heptaprenylglyceryl phosphate synthase (229 aa).

Position 12 (K12) interacts with sn-glycerol 1-phosphate. Residues D14 and S40 each coordinate Mg(2+). Residues 159 to 164 (YLEYSG), G189, and 209 to 210 (GN) each bind sn-glycerol 1-phosphate.

It belongs to the GGGP/HepGP synthase family. Group I subfamily. In terms of assembly, homodimer. It depends on Mg(2+) as a cofactor.

The enzyme catalyses sn-glycerol 1-phosphate + all-trans-heptaprenyl diphosphate = 3-heptaprenyl-sn-glycero-1-phosphate + diphosphate. It functions in the pathway membrane lipid metabolism; glycerophospholipid metabolism. Prenyltransferase that catalyzes in vivo the transfer of the heptaprenyl moiety of heptaprenyl pyrophosphate (HepPP; 35 carbon atoms) to the C3 hydroxyl of sn-glycerol-1-phosphate (G1P), producing heptaprenylglyceryl phosphate (HepGP). This reaction is an ether-bond-formation step in the biosynthesis of archaea-type G1P-based membrane lipids found in Bacillales. This chain is Heptaprenylglyceryl phosphate synthase, found in Bacillus mycoides (strain KBAB4) (Bacillus weihenstephanensis).